The sequence spans 225 residues: Uracil-DNA glycosylase (225 aa).

The Proton acceptor role is filled by aspartate 65.

Belongs to the uracil-DNA glycosylase (UDG) superfamily. UNG family.

The protein localises to the cytoplasm. The catalysed reaction is Hydrolyzes single-stranded DNA or mismatched double-stranded DNA and polynucleotides, releasing free uracil.. In terms of biological role, excises uracil residues from the DNA which can arise as a result of misincorporation of dUMP residues by DNA polymerase or due to deamination of cytosine. The chain is Uracil-DNA glycosylase from Clostridium beijerinckii (strain ATCC 51743 / NCIMB 8052) (Clostridium acetobutylicum).